A 434-amino-acid chain; its full sequence is Glutamyl-tRNA reductase (434 aa).

Substrate is bound by residues 49 to 52, Ser-107, 112 to 114, and Gln-118; these read TCNR and EPQ. Cys-50 acts as the Nucleophile in catalysis. Position 187 to 192 (187 to 192) interacts with NADP(+); it reads GAGETV.

The protein belongs to the glutamyl-tRNA reductase family. As to quaternary structure, homodimer.

It catalyses the reaction (S)-4-amino-5-oxopentanoate + tRNA(Glu) + NADP(+) = L-glutamyl-tRNA(Glu) + NADPH + H(+). The protein operates within porphyrin-containing compound metabolism; protoporphyrin-IX biosynthesis; 5-aminolevulinate from L-glutamyl-tRNA(Glu): step 1/2. In terms of biological role, catalyzes the NADPH-dependent reduction of glutamyl-tRNA(Glu) to glutamate 1-semialdehyde (GSA). The sequence is that of Glutamyl-tRNA reductase from Hydrogenovibrio crunogenus (strain DSM 25203 / XCL-2) (Thiomicrospira crunogena).